Reading from the N-terminus, the 409-residue chain is MQTSFSPATRLGRRALLFPLCLVLFEFAAYIANDMIQPGMLAVVAEFNASVEWVPTSMTAYLAGGMFLQWLLGPLSDRRGRRPVMLAGVAFFVVTCLAILLVNSIEQFIAMRFLQGIGLCFIGAVGYATIQESFEEAVCIKITALMANVALIAPLLGPLAGAALIHVAPWQTMFVLFAVLGAISFAGLWRAMPETASLKGEKLSVANMWRDYKQVLANRRFLCGSLALGFASLPLLAWIAQSPVILISGEQLSTFEYGILQVPIFGALIIGNLTLARLSGKTSIPQLIRYGAGPMIVGLMIAAGSTLYSSHAYLWMTAGLSLYAFGIGLANAGLVRLTLFASDISKGTVSAAMGMISMMIFTLGIELAKVAYLWGDSRGFNLFNLMSGLLWLGLVMVFIRRQPEAVATE.

At 1–15 the chain is on the cytoplasmic side; it reads MQTSFSPATRLGRRA. A helical membrane pass occupies residues 16–36; sequence LLFPLCLVLFEFAAYIANDMI. Residues 37–52 lie on the Periplasmic side of the membrane; it reads QPGMLAVVAEFNASVE. The chain crosses the membrane as a helical span at residues 53-73; it reads WVPTSMTAYLAGGMFLQWLLG. At 74-82 the chain is on the cytoplasmic side; sequence PLSDRRGRR. A helical membrane pass occupies residues 83–103; the sequence is PVMLAGVAFFVVTCLAILLVN. Topologically, residues 104–107 are periplasmic; it reads SIEQ. Residues 108–128 form a helical membrane-spanning segment; it reads FIAMRFLQGIGLCFIGAVGYA. At 129–144 the chain is on the cytoplasmic side; it reads TIQESFEEAVCIKITA. The chain crosses the membrane as a helical span at residues 145-165; it reads LMANVALIAPLLGPLAGAALI. Residues 166–168 are Periplasmic-facing; it reads HVA. Residues 169-189 traverse the membrane as a helical segment; it reads PWQTMFVLFAVLGAISFAGLW. The Cytoplasmic segment spans residues 190 to 226; it reads RAMPETASLKGEKLSVANMWRDYKQVLANRRFLCGSL. The helical transmembrane segment at 227-247 threads the bilayer; sequence ALGFASLPLLAWIAQSPVILI. Residues 248 to 254 are Periplasmic-facing; the sequence is SGEQLST. A helical transmembrane segment spans residues 255–275; that stretch reads FEYGILQVPIFGALIIGNLTL. Residues 276 to 286 are Cytoplasmic-facing; the sequence is ARLSGKTSIPQ. A helical membrane pass occupies residues 287–307; it reads LIRYGAGPMIVGLMIAAGSTL. Residues 308–314 lie on the Periplasmic side of the membrane; it reads YSSHAYL. Residues 315-335 form a helical membrane-spanning segment; sequence WMTAGLSLYAFGIGLANAGLV. At 336-347 the chain is on the cytoplasmic side; it reads RLTLFASDISKG. Residues 348–368 traverse the membrane as a helical segment; sequence TVSAAMGMISMMIFTLGIELA. Residues 369-378 lie on the Periplasmic side of the membrane; the sequence is KVAYLWGDSR. Residues 379-399 traverse the membrane as a helical segment; that stretch reads GFNLFNLMSGLLWLGLVMVFI. Over 400-409 the chain is Cytoplasmic; that stretch reads RRQPEAVATE.

It belongs to the major facilitator superfamily. MdfA family. Monomer.

The protein resides in the cell inner membrane. In terms of biological role, efflux pump driven by the proton motive force. Confers resistance to a broad spectrum of chemically unrelated drugs. This chain is Multidrug transporter MdfA (mdfA), found in Yersinia pestis (strain D182038).